Reading from the N-terminus, the 418-residue chain is Pestheic acid cluster transcriptional regulator 1 (418 aa).

The disordered stretch occupies residues 244-272; that stretch reads GTAVTTTATTSSSFISKSSEEPSPKRIKP. A compositionally biased stretch (low complexity) spans 245–260; it reads TAVTTTATTSSSFISK.

It localises to the nucleus. Transcription factor that, with ptaR2 and ptaR3, coregulates the expression of the gene cluster that mediates the biosynthesis of pestheic acid, a diphenyl ether which is a biosynthetic precursor of the unique chloropupukeananes. The chain is Pestheic acid cluster transcriptional regulator 1 from Pestalotiopsis fici (strain W106-1 / CGMCC3.15140).